The primary structure comprises 86 residues: Small ribosomal subunit protein uS17 (86 aa).

It belongs to the universal ribosomal protein uS17 family. In terms of assembly, part of the 30S ribosomal subunit.

Functionally, one of the primary rRNA binding proteins, it binds specifically to the 5'-end of 16S ribosomal RNA. The protein is Small ribosomal subunit protein uS17 of Streptococcus mutans serotype c (strain ATCC 700610 / UA159).